A 484-amino-acid polypeptide reads, in one-letter code: Putative cysteine ligase BshC (484 aa).

Residues 372-435 adopt a coiled-coil conformation; that stretch reads RAFRDRVEGL…AARDEVLARH (64 aa).

Belongs to the BshC family.

The chain is Putative cysteine ligase BshC from Thermus thermophilus (strain ATCC BAA-163 / DSM 7039 / HB27).